Reading from the N-terminus, the 87-residue chain is Putative phytosulfokines 4 (87 aa).

The N-terminal stretch at Met1–Ala23 is a signal peptide. The propeptide occupies Arg24 to Asp77. Sulfotyrosine occurs at positions 78 and 80. A propeptide spanning residues Lys83–His87 is cleaved from the precursor.

It belongs to the phytosulfokine family. Post-translationally, sulfation is important for activity and for the binding to a putative membrane receptor.

It localises to the secreted. Promotes plant cell differentiation, organogenesis and somatic embryogenesis as well as cell proliferation. In Arabidopsis thaliana (Mouse-ear cress), this protein is Putative phytosulfokines 4 (PSK4).